A 293-amino-acid polypeptide reads, in one-letter code: Nucleotide-binding protein LBA0691 (293 aa).

13-20 (GMSGAGKT) is an ATP binding site. 63–66 (DLRV) is a GTP binding site.

It belongs to the RapZ-like family.

Its function is as follows. Displays ATPase and GTPase activities. The sequence is that of Nucleotide-binding protein LBA0691 from Lactobacillus acidophilus (strain ATCC 700396 / NCK56 / N2 / NCFM).